Reading from the N-terminus, the 878-residue chain is Protein argonaute 6 (878 aa).

The span at 1 to 17 (METSSSLPLSPISIEPE) shows a compositional bias: low complexity. Positions 1–25 (METSSSLPLSPISIEPEQPSHRDYD) are disordered. The 114-residue stretch at 259–372 (PVIEFLKANQ…LPLEFCNLVS (114 aa)) folds into the PAZ domain. The Piwi domain maps to 541–851 (FILCILPERK…AAAQVAQFTK (311 aa)).

The protein belongs to the argonaute family. Ago subfamily. Expressed in roots, cotyledons and shoot meristematic region.

It localises to the nucleus. Involved in transcriptional gene silencing (TGS). Component of the RISC complex that associate with the small interfering RNA (siRNA) pathway involved in direct cytosine methylation at endogenous DNA repeats. Required for the accumulation of specific siRNAs derived from transgene and heterochromatin-related endogenous loci. Involved in RNA-directed DNA methylation (RdDM) at specific endogenous loci. Probably not required for the accumulation of siRNAs derived from transgene inverted repeats that induce post-transcriptional gene silencing (PTGS). Associates mainly with small RNAs of 24 nucleotide in length and preferentially recruits small RNAs with a 5' terminal adenosine. Targeted by turnip yellows virus (TuYV) protein P0 (via F-box-like domain) for probable proteasome degradation and thereby inactivating AGO6 function in RNA silencing. The protein is Protein argonaute 6 (AGO6) of Arabidopsis thaliana (Mouse-ear cress).